The primary structure comprises 190 residues: dCTP deaminase (190 aa).

DCTP is bound at residue 113 to 118 (KSTYAR). Glu-139 acts as the Proton donor/acceptor in catalysis. DCTP is bound by residues Gln-158, Tyr-172, Lys-181, and Gln-182.

This sequence belongs to the dCTP deaminase family. In terms of assembly, homotrimer.

The catalysed reaction is dCTP + H2O + H(+) = dUTP + NH4(+). It functions in the pathway pyrimidine metabolism; dUMP biosynthesis; dUMP from dCTP (dUTP route): step 1/2. In terms of biological role, catalyzes the deamination of dCTP to dUTP. This is dCTP deaminase from Chlamydia trachomatis serovar L2 (strain ATCC VR-902B / DSM 19102 / 434/Bu).